Here is a 244-residue protein sequence, read N- to C-terminus: Serine-rich single-pass membrane protein 1 (244 aa).

The chain crosses the membrane as a helical span at residues cysteine 35–phenylalanine 55. 3 disordered regions span residues aspartate 65 to asparagine 114, glutamine 126 to tyrosine 191, and leucine 210 to phenylalanine 244. The segment covering alanine 80 to alanine 94 has biased composition (basic and acidic residues). Polar residues-rich tracts occupy residues aspartate 96 to asparagine 114 and glutamine 132 to glutamine 142. Residues serine 161–isoleucine 176 are compositionally biased toward basic and acidic residues.

The protein localises to the membrane. The chain is Serine-rich single-pass membrane protein 1 (SSMEM1) from Homo sapiens (Human).